The chain runs to 134 residues: Putative cytochrome c oxidase subunit 6b-like (134 aa).

The interval 1 to 61 (MSSAQMDPHD…DSGRETDAAV (61 aa)) is disordered. Composition is skewed to basic and acidic residues over residues 7–19 (DPHDKMRSRDISK) and 44–61 (ATFRAKRGDSGRETDAAV). In terms of domain architecture, CHCH spans 71 to 114 (TRHCFNRFMQYHKCIEKNGRDANDCNNLRDYVRSICPEELVSKI). Residues 74–84 (CFNRFMQYHKC) carry the Cx9C motif motif. 2 cysteine pairs are disulfide-bonded: C74-C106 and C84-C95. The short motif at 95–106 (CNNLRDYVRSIC) is the Cx10C motif element.

It belongs to the cytochrome c oxidase subunit 6B (TC 3.D.4.8) family.

Its subcellular location is the mitochondrion. Its function is as follows. This protein is one of the nuclear-coded polypeptide chains of cytochrome c oxidase, the terminal oxidase in mitochondrial electron transport. This protein may be one of the heme-binding subunits of the oxidase. The sequence is that of Putative cytochrome c oxidase subunit 6b-like from Arabidopsis thaliana (Mouse-ear cress).